We begin with the raw amino-acid sequence, 203 residues long: Cold-regulated 413 plasma membrane protein 2 (203 aa).

Topologically, residues M1–G43 are extracellular. The helical transmembrane segment at L44–I64 threads the bilayer. At L65–M74 the chain is on the cytoplasmic side. The chain crosses the membrane as a helical span at residues L75 to L95. At S96 to D98 the chain is on the extracellular side. The helical transmembrane segment at V99–P119 threads the bilayer. Residue D120 is a topological domain, cytoplasmic. Residues W121–H141 form a helical membrane-spanning segment. Over H142–R144 the chain is Extracellular. The chain crosses the membrane as a helical span at residues G145–I165. Over R166–R179 the chain is Cytoplasmic. The helical transmembrane segment at G180–V200 threads the bilayer. The Extracellular portion of the chain corresponds to R201–M203.

Belongs to the Cold-regulated 413 protein family.

The protein resides in the cell membrane. The chain is Cold-regulated 413 plasma membrane protein 2 (COR413PM2) from Arabidopsis thaliana (Mouse-ear cress).